The sequence spans 623 residues: Oviduct-specific glycoprotein (623 aa).

The N-terminal stretch at 1 to 21 is a signal peptide; sequence MWKLLLWVGLVLVLKHHDGAA. Residues 22-385 enclose the GH18 domain; that stretch reads HKLVCYFTNW…YVMNDILVRA (364 aa). A disulfide bridge links Cys-26 with Cys-51. Chitin contacts are provided by residues 71 to 72, 98 to 101, Tyr-142, 211 to 214, and Trp-355; these read LQ, GGWN, and LSYD. N-linked (GlcNAc...) asparagine glycosylation is found at Asn-402 and Asn-441. Disordered regions lie at residues 539 to 558 and 594 to 623; these read LTPV…VSPG and RKIS…PQDG. Residues 613–623 are compositionally biased toward polar residues; the sequence is TSETGTHPQDG.

Belongs to the glycosyl hydrolase 18 family. In terms of tissue distribution, oviduct.

Its subcellular location is the cytoplasmic vesicle. It localises to the secretory vesicle. Binds to oocyte zona pellucida in vivo. May play a role in the fertilization process and/or early embryonic development. This Papio anubis (Olive baboon) protein is Oviduct-specific glycoprotein (OVGP1).